The sequence spans 354 residues: S-adenosylmethionine:tRNA ribosyltransferase-isomerase (354 aa).

The protein belongs to the QueA family. Monomer.

It localises to the cytoplasm. It catalyses the reaction 7-aminomethyl-7-carbaguanosine(34) in tRNA + S-adenosyl-L-methionine = epoxyqueuosine(34) in tRNA + adenine + L-methionine + 2 H(+). It participates in tRNA modification; tRNA-queuosine biosynthesis. Functionally, transfers and isomerizes the ribose moiety from AdoMet to the 7-aminomethyl group of 7-deazaguanine (preQ1-tRNA) to give epoxyqueuosine (oQ-tRNA). The sequence is that of S-adenosylmethionine:tRNA ribosyltransferase-isomerase from Salmonella dublin (strain CT_02021853).